The sequence spans 1430 residues: Target of rapamycin complex 2 subunit TSC11 (1430 aa).

Positions 1 to 62 (MSIPHSAKQS…TITNESSKRN (62 aa)) are disordered. Composition is skewed to polar residues over residues 7 to 26 (AKQSSPLSSRRRSVTNTTPL) and 35 to 44 (NSSTQISSAK). Ser-19 is modified (phosphoserine). Low complexity predominate over residues 45 to 57 (NITSSSPSTITNE). 4 positions are modified to phosphoserine: Ser-81, Ser-84, Ser-87, and Ser-141. The stretch at 91–180 (ARRTRSTMTK…EKHIFDLKQQ (90 aa)) forms a coiled coil. The segment at 182 to 285 (DKKRQRSLTT…NLTGDTEKDL (104 aa)) is disordered. Residues 233–265 (TTPTSGTERNSQQNLNRNSTVNSRNNENHSTLS) are compositionally biased toward polar residues. The N-terminal Ras-GEF domain occupies 995-1100 (SVVAVADQAL…FQQKSRLPLH (106 aa)).

This sequence belongs to the RICTOR family. In terms of assembly, the target of rapamycin complex 2 (TORC2) is composed of at least AVO1, AVO2, BIT61, LST8, TOR2 and TSC11. TORC2 forms a homodimer. Contrary to TORC1, TORC2 does not bind to and is not sensitive to FKBP-rapamycin. TSC11 binds to the N-terminal HEAT repeat region in TOR2 and is required for TORC2 integrity by tethering AVO1 and AVO2 to the complex. Phosphorylated by TOR2; when part of TORC2.

Its subcellular location is the cell membrane. It is found in the vacuole membrane. Functionally, essential component of TORC2, which regulates cell cycle-dependent polarization of the actin-cytoskeleton and cell wall integrity. TORC2 controls polarity of the actin cytoskeleton, which is required for orienting the secretory pathway toward discrete growth sites, via the RHO1/PKC1/MAPK cell integrity pathway. TSC11 may exert its functions through two distinct mechanisms, one mediated by AVO1 and the other mediated by AVO2 and SLM1. This chain is Target of rapamycin complex 2 subunit TSC11 (TSC11), found in Saccharomyces cerevisiae (strain ATCC 204508 / S288c) (Baker's yeast).